A 209-amino-acid chain; its full sequence is MSSREKEQTIALSAIFQAAELVSILAKTGQVDNASLQPLLESLLMVNAASTEDIYGGQWDYSTNLALGRKISRQALGKERSSVNPDTLRYALSLIHLENKLSKTPEMLSTIGQKIAQIEQKKAHYESVLHENMVASISGMYQDTLSKLSFRIQVHGDSRFLQQPQVANQVRAILMSGIRAAMLWRQLGGKRWHLIFKRKALLSALESRN.

The protein belongs to the HflD family.

Its subcellular location is the cytoplasm. The protein resides in the cell inner membrane. The polypeptide is High frequency lysogenization protein HflD homolog (Marinomonas sp. (strain MWYL1)).